The following is a 252-amino-acid chain: Phosphate import ATP-binding protein PstB (252 aa).

The 242-residue stretch at 6 to 247 (IDTRDVNFWY…PEKEATQNYI (242 aa)) folds into the ABC transporter domain. An ATP-binding site is contributed by 38 to 45 (GPSGCGKS).

It belongs to the ABC transporter superfamily. Phosphate importer (TC 3.A.1.7) family. The complex is composed of two ATP-binding proteins (PstB), two transmembrane proteins (PstC and PstA) and a solute-binding protein (PstS).

It localises to the cell inner membrane. It carries out the reaction phosphate(out) + ATP + H2O = ADP + 2 phosphate(in) + H(+). Its function is as follows. Part of the ABC transporter complex PstSACB involved in phosphate import. Responsible for energy coupling to the transport system. The protein is Phosphate import ATP-binding protein PstB of Bacteroides thetaiotaomicron (strain ATCC 29148 / DSM 2079 / JCM 5827 / CCUG 10774 / NCTC 10582 / VPI-5482 / E50).